The sequence spans 243 residues: MPCTRSRPSLYSLSYIKRGKTRNCLYPFWSPYAYYLYCYKYRITLREKMLPCCYRSITYKEQEDLTLRPHCCLPCSCLPYSCLPCSESLEGLQVGRSTAQEKDHSQLKELYSAGNLTVLSADPLLHQDPVQLDFHFRLTPHSSAHWHGLLCDHQLFLDIPFQALEQGNRESLTATLEYVEEKTNVDSVFVNFQSNHKDRGALLRAFSYMGFEVVRPDHPALPPWDNVIFMVYPLERDLGQPGQ.

Phosphoserine occurs at positions 6, 9, and 12.

This sequence belongs to the ODC antizyme family. As to quaternary structure, interacts with ODC1 and thereby sterically blocks ODC homodimerization. Interacts with AZIN2; this interaction disrupts the interaction between the antizyme and ODC1. Interacts with GGN. Isoform 2 interacts with PPP1R16A; Modulates PPP1CB activity. As to expression, testis-specific. Isoform 2 is expressed in outer dense fibers, fibrous sheath and the connecting piece of sperm.

The protein localises to the nucleus. The protein resides in the cytoplasm. It localises to the cell projection. It is found in the cilium. Its subcellular location is the flagellum. Its function is as follows. Ornithine decarboxylase (ODC) antizyme protein that negatively regulates ODC activity and intracellular polyamine biosynthesis and uptake in response to increased intracellular polyamine levels. Binds to ODC monomers, inhibiting the assembly of the functional ODC homodimers. Does not target the ODC monomers for degradation, which allows a protein synthesis-independent restoration of ODC activity. Stabilizes AZIN2 by interfering with its ubiquitination. Involved in the translocation of AZNI2 from ER-Golgi intermediate compartment (ERGIC) to the cytosol. Probably plays a key role in spermatogenesis by regulating the intracellular concentration of polyamines in haploid germ cells. Does not possess antizyme activity. Modulates PPP1CB activity through its interaction with PPP1R16A. This chain is Ornithine decarboxylase antizyme 3, found in Rattus norvegicus (Rat).